The primary structure comprises 240 residues: Ribosomal RNA small subunit methyltransferase J (240 aa).

Residues 93–94 and aspartate 162 each bind S-adenosyl-L-methionine; that span reads RD.

This sequence belongs to the methyltransferase superfamily. RsmJ family.

Its subcellular location is the cytoplasm. It catalyses the reaction guanosine(1516) in 16S rRNA + S-adenosyl-L-methionine = N(2)-methylguanosine(1516) in 16S rRNA + S-adenosyl-L-homocysteine + H(+). In terms of biological role, specifically methylates the guanosine in position 1516 of 16S rRNA. The sequence is that of Ribosomal RNA small subunit methyltransferase J from Francisella philomiragia subsp. philomiragia (strain ATCC 25017 / CCUG 19701 / FSC 153 / O#319-036).